The sequence spans 735 residues: E3 UFM1-protein ligase 1 homolog (735 aa).

The disordered stretch occupies residues 389 to 445 (RLEAEKKKQGGAKAAVKVQEETDDWGDGKKGGKGGKKNAKSVKGGSKSSAPSTSSNL). Residues 419 to 428 (GGKGGKKNAK) are compositionally biased toward basic residues. Over residues 429–445 (SVKGGSKSSAPSTSSNL) the composition is skewed to low complexity.

The protein belongs to the UFL1 family.

Its function is as follows. E3 UFM1-protein ligase that mediates ufmylation of target proteins. The sequence is that of E3 UFM1-protein ligase 1 homolog (ufl-1) from Caenorhabditis elegans.